Reading from the N-terminus, the 171-residue chain is Der GTPase-activating protein YihI (171 aa).

Disordered stretches follow at residues 1–99 and 145–171; these read MKKP…QAEL and LSYD…RGGN. Basic and acidic residues predominate over residues 20–30; the sequence is TREELNQEARD. Residues 31–40 are compositionally biased toward basic residues; that stretch reads RKRLKKHRGH. Residues 147-160 are compositionally biased toward acidic residues; sequence YDDDDEDDEEDEKQ.

The protein belongs to the YihI family. As to quaternary structure, interacts with Der.

A GTPase-activating protein (GAP) that modifies Der/EngA GTPase function. May play a role in ribosome biogenesis. This chain is Der GTPase-activating protein YihI, found in Salmonella choleraesuis (strain SC-B67).